A 40-amino-acid polypeptide reads, in one-letter code: Metallothionein-1 (40 aa).

Belongs to the metallothionein superfamily. Type 5 family.

Functionally, this protein binds cations of several transition elements. It is thought to be involved in detoxification processes. The protein is Metallothionein-1 (MtnA) of Drosophila melanogaster (Fruit fly).